A 73-amino-acid chain; its full sequence is UPF0346 protein SSP1318 (73 aa).

Belongs to the UPF0346 family.

This Staphylococcus saprophyticus subsp. saprophyticus (strain ATCC 15305 / DSM 20229 / NCIMB 8711 / NCTC 7292 / S-41) protein is UPF0346 protein SSP1318.